A 379-amino-acid chain; its full sequence is Deoxyuridine 5'-triphosphate nucleotidohydrolase (379 aa).

It belongs to the dUTPase family. Requires Mg(2+) as cofactor.

It carries out the reaction dUTP + H2O = dUMP + diphosphate + H(+). Functionally, involved in nucleotide metabolism: produces dUMP, the immediate precursor of thymidine nucleotides and decreases the intracellular concentration of dUTP to avoid uracil incorporation into viral DNA. This Human herpesvirus 7 (strain JI) (HHV-7) protein is Deoxyuridine 5'-triphosphate nucleotidohydrolase.